The following is a 278-amino-acid chain: MQLRDLLTQATARLTRAGVPSPEVDARLLLEHVLGLNRTAFLLRGGEEIGPDAEARAWDSIERRAARVPLQHLTGEVEWGGVRLTSDARALVPRPETEWLLHLALEELRRVEKPRVLDVGTGTGALALGLKAAIPQAEVTATDLSPEALSLARENAALSGLDVKFVEGSLLAGLSGPFNLIVSNPPYLPTADRATADPEVRHDPDLALYAGEDGLDVARPLVAEAAAALVPGGALLLELDPRNAPTLAAELRTAGWQAEVRPDLTGRERFVRARRAGG.

S-adenosyl-L-methionine is bound by residues 120-124, Asp-143, and Asn-184; that span reads GTGTG. 184–187 serves as a coordination point for substrate; the sequence is NPPY.

The protein belongs to the protein N5-glutamine methyltransferase family. PrmC subfamily.

The enzyme catalyses L-glutaminyl-[peptide chain release factor] + S-adenosyl-L-methionine = N(5)-methyl-L-glutaminyl-[peptide chain release factor] + S-adenosyl-L-homocysteine + H(+). Methylates the class 1 translation termination release factors RF1/PrfA and RF2/PrfB on the glutamine residue of the universally conserved GGQ motif. The protein is Release factor glutamine methyltransferase of Deinococcus radiodurans (strain ATCC 13939 / DSM 20539 / JCM 16871 / CCUG 27074 / LMG 4051 / NBRC 15346 / NCIMB 9279 / VKM B-1422 / R1).